We begin with the raw amino-acid sequence, 382 residues long: UDP-N-acetylglucosamine--N-acetylmuramyl-(pentapeptide) pyrophosphoryl-undecaprenol N-acetylglucosamine transferase (382 aa).

UDP-N-acetyl-alpha-D-glucosamine is bound by residues threonine 11 to glycine 13, asparagine 124, arginine 165, serine 200, isoleucine 254, and glutamine 299.

The protein belongs to the glycosyltransferase 28 family. MurG subfamily.

The protein resides in the cell inner membrane. The catalysed reaction is di-trans,octa-cis-undecaprenyl diphospho-N-acetyl-alpha-D-muramoyl-L-alanyl-D-glutamyl-meso-2,6-diaminopimeloyl-D-alanyl-D-alanine + UDP-N-acetyl-alpha-D-glucosamine = di-trans,octa-cis-undecaprenyl diphospho-[N-acetyl-alpha-D-glucosaminyl-(1-&gt;4)]-N-acetyl-alpha-D-muramoyl-L-alanyl-D-glutamyl-meso-2,6-diaminopimeloyl-D-alanyl-D-alanine + UDP + H(+). It functions in the pathway cell wall biogenesis; peptidoglycan biosynthesis. In terms of biological role, cell wall formation. Catalyzes the transfer of a GlcNAc subunit on undecaprenyl-pyrophosphoryl-MurNAc-pentapeptide (lipid intermediate I) to form undecaprenyl-pyrophosphoryl-MurNAc-(pentapeptide)GlcNAc (lipid intermediate II). The protein is UDP-N-acetylglucosamine--N-acetylmuramyl-(pentapeptide) pyrophosphoryl-undecaprenol N-acetylglucosamine transferase of Nitratidesulfovibrio vulgaris (strain DSM 19637 / Miyazaki F) (Desulfovibrio vulgaris).